Reading from the N-terminus, the 732-residue chain is Polyphosphate kinase (732 aa).

Position 61 (Asn-61) interacts with ATP. The Mg(2+) site is built by Arg-417 and Arg-447. His-477 serves as the catalytic Phosphohistidine intermediate. ATP is bound by residues Tyr-510, Arg-606, and His-634. The segment at 699–718 (DGTYRQRQPAPGEAERGTHS) is disordered.

The protein belongs to the polyphosphate kinase 1 (PPK1) family. It depends on Mg(2+) as a cofactor. Post-translationally, an intermediate of this reaction is the autophosphorylated ppk in which a phosphate is covalently linked to a histidine residue through a N-P bond.

The enzyme catalyses [phosphate](n) + ATP = [phosphate](n+1) + ADP. Catalyzes the reversible transfer of the terminal phosphate of ATP to form a long-chain polyphosphate (polyP). The sequence is that of Polyphosphate kinase from Thermosynechococcus vestitus (strain NIES-2133 / IAM M-273 / BP-1).